The primary structure comprises 351 residues: Holliday junction branch migration complex subunit RuvB (351 aa).

Positions 1–186 are large ATPase domain (RuvB-L); sequence MDEKIETRLI…FGIVQRLEFY (186 aa). ATP-binding positions include Ile-25, Arg-26, Gly-67, Lys-70, Thr-71, Thr-72, 133-135, Arg-176, Tyr-186, and Arg-223; that span reads EDF. Thr-71 is a binding site for Mg(2+). The segment at 187 to 257 is small ATPAse domain (RuvB-S); the sequence is RIPDLIHIVK…IAKEALDLLN (71 aa). The head domain (RuvB-H) stretch occupies residues 260–351; sequence IRGLDVMDRK…ENFDLLGKVE (92 aa). DNA contacts are provided by Arg-296, Arg-315, and Arg-320.

The protein belongs to the RuvB family. In terms of assembly, homohexamer. Forms an RuvA(8)-RuvB(12)-Holliday junction (HJ) complex. HJ DNA is sandwiched between 2 RuvA tetramers; dsDNA enters through RuvA and exits via RuvB. An RuvB hexamer assembles on each DNA strand where it exits the tetramer. Each RuvB hexamer is contacted by two RuvA subunits (via domain III) on 2 adjacent RuvB subunits; this complex drives branch migration. In the full resolvosome a probable DNA-RuvA(4)-RuvB(12)-RuvC(2) complex forms which resolves the HJ.

The protein localises to the cytoplasm. The enzyme catalyses ATP + H2O = ADP + phosphate + H(+). The RuvA-RuvB-RuvC complex processes Holliday junction (HJ) DNA during genetic recombination and DNA repair, while the RuvA-RuvB complex plays an important role in the rescue of blocked DNA replication forks via replication fork reversal (RFR). RuvA specifically binds to HJ cruciform DNA, conferring on it an open structure. The RuvB hexamer acts as an ATP-dependent pump, pulling dsDNA into and through the RuvAB complex. RuvB forms 2 homohexamers on either side of HJ DNA bound by 1 or 2 RuvA tetramers; 4 subunits per hexamer contact DNA at a time. Coordinated motions by a converter formed by DNA-disengaged RuvB subunits stimulates ATP hydrolysis and nucleotide exchange. Immobilization of the converter enables RuvB to convert the ATP-contained energy into a lever motion, pulling 2 nucleotides of DNA out of the RuvA tetramer per ATP hydrolyzed, thus driving DNA branch migration. The RuvB motors rotate together with the DNA substrate, which together with the progressing nucleotide cycle form the mechanistic basis for DNA recombination by continuous HJ branch migration. Branch migration allows RuvC to scan DNA until it finds its consensus sequence, where it cleaves and resolves cruciform DNA. The polypeptide is Holliday junction branch migration complex subunit RuvB (Coxiella burnetii (strain RSA 331 / Henzerling II)).